The sequence spans 500 residues: 4-aminobutyrate aminotransferase, mitochondrial (500 aa).

A mitochondrion-targeting transit peptide spans 1–28; the sequence is MAFLLITRRLACSSQKNLHLFIPGSRYI. Cysteine 163 contributes to the [2Fe-2S] cluster binding site. 164–165 contacts pyridoxal 5'-phosphate; it reads GS. Cysteine 166 is a [2Fe-2S] cluster binding site. Arginine 220 is a substrate binding site. An N6-succinyllysine modification is found at lysine 231. The residue at position 252 (lysine 252) is an N6-acetyllysine; alternate. Lysine 252 is subject to N6-succinyllysine; alternate. An N6-acetyllysine mark is found at lysine 279 and lysine 318. Residue lysine 357 is modified to N6-(pyridoxal phosphate)lysine. Pyridoxal 5'-phosphate is bound at residue threonine 381. Lysine 413 carries the post-translational modification N6-acetyllysine; alternate. Lysine 413 is subject to N6-succinyllysine; alternate. Residues lysine 452 and lysine 470 each carry the N6-acetyllysine modification.

It belongs to the class-III pyridoxal-phosphate-dependent aminotransferase family. In terms of assembly, homodimer; disulfide-linked. It depends on pyridoxal 5'-phosphate as a cofactor. [2Fe-2S] cluster serves as cofactor.

Its subcellular location is the mitochondrion matrix. It carries out the reaction 4-aminobutanoate + 2-oxoglutarate = succinate semialdehyde + L-glutamate. The catalysed reaction is (S)-3-amino-2-methylpropanoate + 2-oxoglutarate = 2-methyl-3-oxopropanoate + L-glutamate. In terms of biological role, catalyzes the conversion of gamma-aminobutyrate and L-beta-aminoisobutyrate to succinate semialdehyde and methylmalonate semialdehyde, respectively. Can also convert delta-aminovalerate and beta-alanine. This Mus musculus (Mouse) protein is 4-aminobutyrate aminotransferase, mitochondrial.